Here is a 56-residue protein sequence, read N- to C-terminus: Sex-specific storage protein 1 (56 aa).

The protein belongs to the hemocyanin family. In terms of tissue distribution, expressed in fat body and ovary.

It is found in the secreted. In terms of biological role, larval storage protein (LSP) which may serve as a store of amino acids for synthesis of adult proteins. The biosynthesis, accumulation and sequestration of storage protein-1 takes place during metamorphosis and saves energy for the non-feeding pupal stage. May also be essential for egg formation. This chain is Sex-specific storage protein 1, found in Amsacta albistriga (Red hairy caterpillar).